We begin with the raw amino-acid sequence, 257 residues long: K88 minor fimbrial subunit FaeJ (257 aa).

A signal peptide spans 1-26 (MLNIIHRLKSGMFPALFFLTSASVLA).

The protein resides in the fimbrium. Its function is as follows. K88 minor fimbrial subunit, plays an essential role in the biogenesis of the K88 fimbriae. Fimbriae (also called pili), are polar filaments radiating from the surface of the bacterium to a length of 0.5-1.5 micrometers and numbering 100-300 per cell. They enable bacteria to colonize the epithelium of specific host organs. This Escherichia coli protein is K88 minor fimbrial subunit FaeJ (faeJ).